A 360-amino-acid polypeptide reads, in one-letter code: Probable cinnamyl alcohol dehydrogenase 6 (360 aa).

Cys48 is a binding site for Zn(2+). An NADP(+)-binding site is contributed by Thr50. Positions 70, 71, 101, 104, 107, 115, and 164 each coordinate Zn(2+). Residues Thr168, 192–197 (GLGGLG), 215–220 (STSPAK), Thr255, Gly279, and 302–304 (SMT) contribute to the NADP(+) site.

It belongs to the zinc-containing alcohol dehydrogenase family. In terms of assembly, homodimer. Requires Zn(2+) as cofactor.

The catalysed reaction is (E)-cinnamyl alcohol + NADP(+) = (E)-cinnamaldehyde + NADPH + H(+). It carries out the reaction (E)-coniferol + NADP(+) = (E)-coniferaldehyde + NADPH + H(+). It catalyses the reaction (E)-sinapyl alcohol + NADP(+) = (E)-sinapaldehyde + NADPH + H(+). The enzyme catalyses (E)-4-coumaroyl alcohol + NADP(+) = (E)-4-coumaraldehyde + NADPH + H(+). The catalysed reaction is (E)-caffeyl alcohol + NADP(+) = (E)-caffeyl aldehyde + NADPH + H(+). It functions in the pathway aromatic compound metabolism; phenylpropanoid biosynthesis. Involved in lignin biosynthesis. Catalyzes the final step specific for the production of lignin monomers. Catalyzes the NADPH-dependent reduction of coniferaldehyde, 5-hydroxyconiferaldehyde, sinapaldehyde, 4-coumaraldehyde and caffeyl aldehyde to their respective alcohols. This Oryza sativa subsp. japonica (Rice) protein is Probable cinnamyl alcohol dehydrogenase 6.